Consider the following 328-residue polypeptide: Tetraacyldisaccharide 4'-kinase (328 aa).

Residue 55-62 (TAGGNGKT) coordinates ATP.

It belongs to the LpxK family.

The enzyme catalyses a lipid A disaccharide + ATP = a lipid IVA + ADP + H(+). The protein operates within glycolipid biosynthesis; lipid IV(A) biosynthesis; lipid IV(A) from (3R)-3-hydroxytetradecanoyl-[acyl-carrier-protein] and UDP-N-acetyl-alpha-D-glucosamine: step 6/6. In terms of biological role, transfers the gamma-phosphate of ATP to the 4'-position of a tetraacyldisaccharide 1-phosphate intermediate (termed DS-1-P) to form tetraacyldisaccharide 1,4'-bis-phosphate (lipid IVA). This is Tetraacyldisaccharide 4'-kinase from Shigella boydii serotype 18 (strain CDC 3083-94 / BS512).